A 330-amino-acid chain; its full sequence is Pyridoxal 5'-phosphate synthase subunit PdxS (330 aa).

Aspartate 23 contributes to the D-ribose 5-phosphate binding site. Catalysis depends on lysine 80, which acts as the Schiff-base intermediate with D-ribose 5-phosphate. Position 152 (glycine 152) interacts with D-ribose 5-phosphate. Arginine 164 is a binding site for D-glyceraldehyde 3-phosphate. Residues glycine 250 and glycine 271–serine 272 each bind D-ribose 5-phosphate.

Belongs to the PdxS/SNZ family. In terms of assembly, in the presence of PdxT, forms a dodecamer of heterodimers.

The enzyme catalyses aldehydo-D-ribose 5-phosphate + D-glyceraldehyde 3-phosphate + L-glutamine = pyridoxal 5'-phosphate + L-glutamate + phosphate + 3 H2O + H(+). Its pathway is cofactor biosynthesis; pyridoxal 5'-phosphate biosynthesis. Functionally, catalyzes the formation of pyridoxal 5'-phosphate from ribose 5-phosphate (RBP), glyceraldehyde 3-phosphate (G3P) and ammonia. The ammonia is provided by the PdxT subunit. Can also use ribulose 5-phosphate and dihydroxyacetone phosphate as substrates, resulting from enzyme-catalyzed isomerization of RBP and G3P, respectively. This chain is Pyridoxal 5'-phosphate synthase subunit PdxS, found in Methanocaldococcus jannaschii (strain ATCC 43067 / DSM 2661 / JAL-1 / JCM 10045 / NBRC 100440) (Methanococcus jannaschii).